The following is a 291-amino-acid chain: Ribosome maturation factor RimP (291 aa).

The segment at 188 to 291 is disordered; the sequence is ERGLGEDEEF…GGKPKAKETH (104 aa). Residues 193–211 are compositionally biased toward acidic residues; it reads EDEEFEDDADEVFEGDEAD. 2 stretches are compositionally biased toward basic and acidic residues: residues 212-237 and 245-254; these read EKAA…EKRA and AKSEKAEKSQ.

Belongs to the RimP family.

It localises to the cytoplasm. Required for maturation of 30S ribosomal subunits. The sequence is that of Ribosome maturation factor RimP from Azorhizobium caulinodans (strain ATCC 43989 / DSM 5975 / JCM 20966 / LMG 6465 / NBRC 14845 / NCIMB 13405 / ORS 571).